The chain runs to 95 residues: Large ribosomal subunit protein bL25 (95 aa).

It belongs to the bacterial ribosomal protein bL25 family. In terms of assembly, part of the 50S ribosomal subunit; part of the 5S rRNA/L5/L18/L25 subcomplex. Contacts the 5S rRNA. Binds to the 5S rRNA independently of L5 and L18.

Functionally, this is one of the proteins that binds to the 5S RNA in the ribosome where it forms part of the central protuberance. The sequence is that of Large ribosomal subunit protein bL25 from Haemophilus ducreyi (strain 35000HP / ATCC 700724).